Here is a 305-residue protein sequence, read N- to C-terminus: Olfactory receptor 9G19 (305 aa).

Residues 1–24 are Extracellular-facing; the sequence is MDQNNNTVSEFIMLGFTTDPVIQK. A helical transmembrane segment spans residues 25 to 45; that stretch reads VLFAVFLVVYTLTLMGNSSLI. Residues 46 to 55 lie on the Cytoplasmic side of the membrane; that stretch reads MLICNDSRLH. The helical transmembrane segment at 56-76 threads the bilayer; that stretch reads TPMYFFIGNLSFLDLGLSSVY. Residues 77–96 are Extracellular-facing; sequence TPKILETCISEDKSISFAGC. Residues cysteine 96 and cysteine 178 are joined by a disulfide bond. A helical transmembrane segment spans residues 97 to 117; that stretch reads VAQFFFSAALDYTECYLLAAM. Over 118-138 the chain is Cytoplasmic; that stretch reads AYDRYVAISKPLLYSQAMSLK. The chain crosses the membrane as a helical span at residues 139–159; that stretch reads LCVCFVVASYVGGFINSVIIT. Residues 160 to 204 lie on the Extracellular side of the membrane; that stretch reads KDTFALTFCNDNVIDDFFCDIPPLVKLACGKKKSFQSVLFFLLTS. A helical transmembrane segment spans residues 205-225; sequence NVIIPIVFILATYLFIIATIL. Topologically, residues 226-236 are cytoplasmic; sequence RIRSTQGRLKA. Residues 237-257 traverse the membrane as a helical segment; sequence FSTCSSHLISVTLYYGSILYI. The Extracellular segment spans residues 258–270; it reads YARPRSSYSLDRD. The helical transmembrane segment at 271 to 291 threads the bilayer; sequence KIVSTFYTVVFPMLNPLIYSL. The Cytoplasmic portion of the chain corresponds to 292–305; that stretch reads RNKDVKEALNKLLK.

Belongs to the G-protein coupled receptor 1 family.

The protein localises to the cell membrane. Its function is as follows. Odorant receptor. The protein is Olfactory receptor 9G19 of Mus musculus (Mouse).